Reading from the N-terminus, the 443-residue chain is Ribitol-5-phosphate xylosyltransferase 1 (443 aa).

The Cytoplasmic segment spans residues 1–9 (MRLTRKRLC). Residues 10 to 30 (SFLIALYCLFSLYAAYHVFFG) form a helical; Signal-anchor for type II membrane protein membrane-spanning segment. Over 31 to 443 (RRRQAPAGSP…ESSFLMNNKS (413 aa)) the chain is Extracellular. The interval 35-76 (APAGSPRGLRKGAAPARERRGREQSTLESEEWNPWEGDEKNE) is disordered. Positions 50-59 (ARERRGREQS) are enriched in basic and acidic residues.

The protein belongs to the RXYLT1 family. In terms of assembly, forms a complex composed of FKTN/fukutin, FKRP and RXYLT1/TMEM5.

The protein localises to the golgi apparatus membrane. It catalyses the reaction 3-O-[Rib-ol-P-Rib-ol-P-3-beta-D-GalNAc-(1-&gt;3)-beta-D-GlcNAc-(1-&gt;4)-(O-6-P-alpha-D-Man)]-Thr-[protein] + UDP-alpha-D-xylose = 3-O-[beta-D-Xyl-(1-&gt;4)-Rib-ol-P-Rib-ol-P-3-beta-D-GalNAc-(1-&gt;3)-beta-D-GlcNAc-(1-&gt;4)-(O-6-P-alpha-D-Man)]-Thr-[protein] + UDP + H(+). It functions in the pathway protein modification; protein glycosylation. Acts as a UDP-D-xylose:ribitol-5-phosphate beta1,4-xylosyltransferase, which catalyzes the transfer of UDP-D-xylose to ribitol 5-phosphate (Rbo5P) to form the Xylbeta1-4Rbo5P linkage on O-mannosyl glycan. Participates in the biosynthesis of the phosphorylated O-mannosyl trisaccharide (N-acetylgalactosamine-beta-3-N-acetylglucosamine-beta-4-(phosphate-6-)mannose), a carbohydrate structure present in alpha-dystroglycan (DAG1), which is required for binding laminin G-like domain-containing extracellular proteins with high affinity. This Homo sapiens (Human) protein is Ribitol-5-phosphate xylosyltransferase 1.